A 336-amino-acid chain; its full sequence is Fructokinase-2 (336 aa).

It belongs to the carbohydrate kinase PfkB family. Expressed in stem, sheaths, anthers, and panicles (at protein level).

It catalyses the reaction D-fructose + ATP = D-fructose 6-phosphate + ADP + H(+). It participates in glycan biosynthesis; starch biosynthesis. Strongly inhibited at high fructose concentration. May play an important role in maintaining the flux of carbon towards starch formation in endosperm. May also be involved in a sugar-sensing pathway. The polypeptide is Fructokinase-2 (FRK2) (Oryza sativa subsp. japonica (Rice)).